We begin with the raw amino-acid sequence, 339 residues long: Uroporphyrinogen decarboxylase (339 aa).

Residues 21–25 (RQAGR), Asp-71, Tyr-147, Ser-202, and His-315 contribute to the substrate site.

Belongs to the uroporphyrinogen decarboxylase family. In terms of assembly, homodimer.

Its subcellular location is the cytoplasm. The enzyme catalyses uroporphyrinogen III + 4 H(+) = coproporphyrinogen III + 4 CO2. The protein operates within porphyrin-containing compound metabolism; protoporphyrin-IX biosynthesis; coproporphyrinogen-III from 5-aminolevulinate: step 4/4. Functionally, catalyzes the decarboxylation of four acetate groups of uroporphyrinogen-III to yield coproporphyrinogen-III. The polypeptide is Uroporphyrinogen decarboxylase (Helicobacter pylori (strain HPAG1)).